We begin with the raw amino-acid sequence, 114 residues long: MTRVKRGYVARRHRNRILALTSGFQGAHSKLFRTANQQGMKALTYAYRDRANCKRDFRRLWITRINAAARENQITYNNMIHSLYMNQIHLNRKILAQIAALDKDCFVEILRIIK.

It belongs to the bacterial ribosomal protein bL20 family.

It localises to the plastid. The protein resides in the chloroplast. Its function is as follows. Binds directly to 23S ribosomal RNA and is necessary for the in vitro assembly process of the 50S ribosomal subunit. It is not involved in the protein synthesizing functions of that subunit. The protein is Large ribosomal subunit protein bL20c of Psilotum nudum (Whisk fern).